A 545-amino-acid chain; its full sequence is Glutamine-dependent NAD(+) synthetase (545 aa).

One can recognise a CN hydrolase domain in the interval 5-247 (LRIAMAQFDF…DQWLVVDYMR (243 aa)). Residue Glu46 is the Proton acceptor; for glutaminase activity of the active site. Catalysis depends on Lys113, which acts as the For glutaminase activity. Tyr119 lines the L-glutamine pocket. Residue Cys151 is the Nucleophile; for glutaminase activity of the active site. L-glutamine is bound by residues Ser177 and Lys183. Residues 269–545 (VWRAVVRGVQ…RYPISNAYRG (277 aa)) form a ligase region. Position 292–299 (292–299 (GLSGGIDS)) interacts with ATP. Asn375 is a binding site for deamido-NAD(+). Thr399 lines the ATP pocket. Deamido-NAD(+) contacts are provided by Glu404 and Lys516.

In the C-terminal section; belongs to the NAD synthetase family.

It catalyses the reaction deamido-NAD(+) + L-glutamine + ATP + H2O = L-glutamate + AMP + diphosphate + NAD(+) + H(+). Its pathway is cofactor biosynthesis; NAD(+) biosynthesis; NAD(+) from deamido-NAD(+) (L-Gln route): step 1/1. Catalyzes the ATP-dependent amidation of deamido-NAD to form NAD. Uses L-glutamine as a nitrogen source. In Xylella fastidiosa (strain Temecula1 / ATCC 700964), this protein is Glutamine-dependent NAD(+) synthetase.